The sequence spans 567 residues: uncharacterized protein (567 aa).

Belongs to the protein kinase superfamily. ADCK protein kinase family.

This is an uncharacterized protein from Synechocystis sp. (strain ATCC 27184 / PCC 6803 / Kazusa).